Here is an 88-residue protein sequence, read N- to C-terminus: DNA-directed RNA polymerase subunit omega (88 aa).

It belongs to the RNA polymerase subunit omega family. In terms of assembly, the RNAP catalytic core consists of 2 alpha, 1 beta, 1 beta' and 1 omega subunit. When a sigma factor is associated with the core the holoenzyme is formed, which can initiate transcription.

The enzyme catalyses RNA(n) + a ribonucleoside 5'-triphosphate = RNA(n+1) + diphosphate. Promotes RNA polymerase assembly. Latches the N- and C-terminal regions of the beta' subunit thereby facilitating its interaction with the beta and alpha subunits. This Salinispora tropica (strain ATCC BAA-916 / DSM 44818 / JCM 13857 / NBRC 105044 / CNB-440) protein is DNA-directed RNA polymerase subunit omega.